Reading from the N-terminus, the 228-residue chain is ATP-dependent dethiobiotin synthetase BioD (228 aa).

Residue 13 to 18 participates in ATP binding; the sequence is DIGKTF. Residue Thr17 participates in Mg(2+) binding. Lys38 is an active-site residue. Ser42 is a substrate binding site. Residues Asp55, 116–119, 179–180, and 208–210 contribute to the ATP site; these read EGSG, NK, and PKI. Mg(2+) contacts are provided by Asp55 and Glu116.

This sequence belongs to the dethiobiotin synthetase family. Homodimer. The cofactor is Mg(2+).

The protein localises to the cytoplasm. It catalyses the reaction (7R,8S)-7,8-diammoniononanoate + CO2 + ATP = (4R,5S)-dethiobiotin + ADP + phosphate + 3 H(+). It functions in the pathway cofactor biosynthesis; biotin biosynthesis; biotin from 7,8-diaminononanoate: step 1/2. Functionally, catalyzes a mechanistically unusual reaction, the ATP-dependent insertion of CO2 between the N7 and N8 nitrogen atoms of 7,8-diaminopelargonic acid (DAPA, also called 7,8-diammoniononanoate) to form a ureido ring. This chain is ATP-dependent dethiobiotin synthetase BioD, found in Clostridium perfringens (strain 13 / Type A).